Consider the following 91-residue polypeptide: UPF0147 protein DKAM_0139 (91 aa).

This sequence belongs to the UPF0147 family.

This is UPF0147 protein DKAM_0139 from Desulfurococcus amylolyticus (strain DSM 18924 / JCM 16383 / VKM B-2413 / 1221n) (Desulfurococcus kamchatkensis).